An 854-amino-acid polypeptide reads, in one-letter code: Translation initiation factor IF-2 (854 aa).

Residues 61-72 (KNIKTPTAKKPK) show a composition bias toward basic residues. Disordered regions lie at residues 61–115 (KNIK…LASA) and 167–186 (ESLKKKKKEKKSFVASKKES). The span at 73-108 (KENAKDQEKLNESEKKEPKKEESKEQEKQEIIDTHK) shows a compositional bias: basic and acidic residues. The tr-type G domain occupies 353-520 (TRAPVITIMG…IVLLQADILE (168 aa)). The tract at residues 362 to 369 (GHVDHGKT) is G1. GTP is bound at residue 362–369 (GHVDHGKT). The segment at 387-391 (GITQH) is G2. The tract at residues 408 to 411 (DTPG) is G3. Residues 408–412 (DTPGH) and 462–465 (NKMD) contribute to the GTP site. Residues 462–465 (NKMD) are G4. The G5 stretch occupies residues 498-500 (SAK).

The protein belongs to the TRAFAC class translation factor GTPase superfamily. Classic translation factor GTPase family. IF-2 subfamily.

It localises to the cytoplasm. Functionally, one of the essential components for the initiation of protein synthesis. Protects formylmethionyl-tRNA from spontaneous hydrolysis and promotes its binding to the 30S ribosomal subunits. Also involved in the hydrolysis of GTP during the formation of the 70S ribosomal complex. In Campylobacter jejuni subsp. doylei (strain ATCC BAA-1458 / RM4099 / 269.97), this protein is Translation initiation factor IF-2.